A 362-amino-acid chain; its full sequence is MAQVFNFSSGPAMLPVDVLKQAQQELCDWQGLGTSVMEISHRGKEFIQVAEEAEKDFRDLLNIPSNYKVLFCHGGGRGQFAGIPLNLLGDKTGADYVDAGYWAASAVKEAHKYCTPNVIDAKVTVDGLRAVKPMSEWQLSDNAAYLHYCPNETIDGIAIHEEPNFGNDVVVTADLSSTILSGPLDVSRYGVIYAGAQKNIGPAGLTLVIVREDLLGKAHKACPSILDYTVLNDNDSMFNTPPTFAWYLSGLVFKWLKKNGGVAQMDKINQQKAELLYSTIDGSDFYRNDVAKANRSRMNVPFQLADSNLDKVFLEESFAAGLHALKGHRVVGGMRASIYNAMPLEGVNTLTDFMVDFERRHG.

Positions 9 and 42 each coordinate L-glutamate. Residues 76 to 77 (GR), W102, T153, D174, and Q197 each bind pyridoxal 5'-phosphate. K198 bears the N6-(pyridoxal phosphate)lysine mark. Pyridoxal 5'-phosphate is bound at residue 239–240 (NT).

Belongs to the class-V pyridoxal-phosphate-dependent aminotransferase family. SerC subfamily. In terms of assembly, homodimer. Pyridoxal 5'-phosphate is required as a cofactor.

It is found in the cytoplasm. It catalyses the reaction O-phospho-L-serine + 2-oxoglutarate = 3-phosphooxypyruvate + L-glutamate. It carries out the reaction 4-(phosphooxy)-L-threonine + 2-oxoglutarate = (R)-3-hydroxy-2-oxo-4-phosphooxybutanoate + L-glutamate. It functions in the pathway amino-acid biosynthesis; L-serine biosynthesis; L-serine from 3-phospho-D-glycerate: step 2/3. Its pathway is cofactor biosynthesis; pyridoxine 5'-phosphate biosynthesis; pyridoxine 5'-phosphate from D-erythrose 4-phosphate: step 3/5. Its function is as follows. Catalyzes the reversible conversion of 3-phosphohydroxypyruvate to phosphoserine and of 3-hydroxy-2-oxo-4-phosphonooxybutanoate to phosphohydroxythreonine. This is Phosphoserine aminotransferase from Enterobacter sp. (strain 638).